The primary structure comprises 97 residues: DNA/RNA-binding protein Alba 1 (97 aa).

Position 2 is an N-acetylserine; by ard1 acetylase (Ser2). RNA is bound by residues Lys16, Lys17, and Tyr22. At Lys16 the chain carries N6,N6,N6-trimethyllysine; alternate. N6,N6-dimethyllysine; alternate is present on Lys16. At Lys16 the chain carries N6-acetyllysine; alternate. An N6-methyllysine; alternate modification is found at Lys16. Asn31 is modified (deamidated asparagine; partial). Gln32 is modified (deamidated glutamine; partial). Residue Lys40 is modified to N6-methyllysine; partial. RNA contacts are provided by Arg42 and Arg44. The residue at position 48 (Lys48) is an N6-acetyllysine; partial. Residue Asp51 is modified to Aspartate methyl ester; partial. Asn58 is subject to Deamidated asparagine; partial. The residue at position 64 (Lys64) is an N6-acetyllysine; alternate; partial. Lys64 carries the post-translational modification N6-methyllysine; alternate; partial. Lys68 is modified (N6-acetyllysine; partial). The residue at position 75 (Gln75) is an N5-methylglutamine; partial. An Aspartate methyl ester; partial modification is found at Asp81. N6-methyllysine; partial is present on Lys97.

It belongs to the histone-like Alba family. As to quaternary structure, forms homodimers and higher order oligomers, e.g. homotetramers. Post-translationally, acetylated. Acetylation at Lys-16 by the Pat acetylase decreases DNA-binding affinity. Deacetylation at Lys-16 by the CobB deacetylase increases DNA-binding affinity. Acetylation at Ser-2 is involved in the regulation of the turnover of the protein.

It localises to the cytoplasm. It is found in the chromosome. Binds double-stranded DNA tightly but without sequence specificity. Involved in DNA compaction. Possesses DNA endonuclease activity. Prevents transcription after DNA binding. Binds single-stranded DNA and RNA in vitro. Binds rRNA and mRNA in vivo. May play a role in maintaining the structural and functional stability of RNA, and, perhaps, ribosomes. Binds double-stranded RNA (dsRNA) and exhibits RNA chaperone activity. Required for normal growth. The sequence is that of DNA/RNA-binding protein Alba 1 from Saccharolobus islandicus (strain REY15A) (Sulfolobus islandicus).